The sequence spans 454 residues: Replicative DNA helicase DnaB (454 aa).

An N-terminal domain (NTD) region spans residues 1–149 (MSELFSERIP…LDEADRKIME (149 aa)). The linker helix stretch occupies residues 163-176 (KDILVQTYDNIEML). The region spanning 179 to 445 (RDGEITGIPT…NKFVNLERRF (267 aa)) is the SF4 helicase domain. The interval 183 to 454 (ITGIPTGFTE…FDEAQIPPGA (272 aa)) is C-terminal domain (CTD). ATP contacts are provided by Ser213, Gly215, Lys216, Thr217, and Ala218. Catalysis depends on Glu241, which acts as the Nucleophile. ATP-binding residues include Arg250 and Gln362. 3 residues coordinate ssDNA: Arg381, Glu382, and Gly384. Residues Lys418, Gln419, and Arg420 each contribute to the ATP site.

It belongs to the helicase family. DnaB subfamily. Homohexamer. Interacts with DnaG primase, as DnaB(6):DnaG(3). Interacts with the N-terminus of DnaI (shown with DnaI of B.subtilis), forms a helicase DnaB(6):DnaI(6) complex. The DnaB-DnaI complex is disrupted by DnaD (DnaD and DnaI from B.subtilis). A stable complex DnaI(6):DnaB(6):DnaG(3) fragment can be isolated; DnaI and DnaG do not contact each other (DnaI in this complex is derived from B.subtilis). Forms a complex with DNA clamp loader protein tau (shown with B.subtilis HolA) tau(3):DnaB(6); a single ATP hydrolysis even is sufficient for complex formation.

The enzyme catalyses Couples ATP hydrolysis with the unwinding of duplex DNA at the replication fork by translocating in the 5'-3' direction. This creates two antiparallel DNA single strands (ssDNA). The leading ssDNA polymer is the template for DNA polymerase III holoenzyme which synthesizes a continuous strand.. It carries out the reaction ATP + H2O = ADP + phosphate + H(+). In terms of biological role, the main replicative DNA helicase, it participates in initiation and elongation during chromosome replication. Travels ahead of the DNA replisome, separating double-stranded (ds)DNA into templates for DNA synthesis. Binding of single-stranded (ss)DNA to the hexamer suggests a 2-nucleotide step size for the helicase and a hand-over-hand mechanism of DNA unwinding. Has ssDNA-stimulated ATPase activity. DnaG primase stimulates the helicase activity (the helicase direction was not determine but is probably 5'-3'). Loaded onto DNA by helicase loader DnaI (shown with DnaI of B.subtilis); ATP-binding enhances loading and subsequent ATP hydrolysis dissociates the complex, leaving helicase on the DNA. Binds ssDNA and less well dsDNA, in the presence of ADPNP (probably 5'-adenylyl beta, gamma-imidodiphosphate, but not ATP) binding to both DNAs is improved. This is Replicative DNA helicase DnaB from Geobacillus stearothermophilus (Bacillus stearothermophilus).